A 965-amino-acid chain; its full sequence is Pullulanase 1, chloroplastic (965 aa).

The transit peptide at 1 to 62 (MALTLTPTSS…SKTSLHCLCS (62 aa)) directs the protein to the chloroplast. The active-site Nucleophile is the Asp552. Glu589 functions as the Proton donor in the catalytic mechanism.

The protein belongs to the glycosyl hydrolase 13 family.

The protein resides in the plastid. Its subcellular location is the chloroplast stroma. The enzyme catalyses Hydrolysis of (1-&gt;6)-alpha-D-glucosidic linkages in alpha- and beta-limit dextrins of amylopectin and glycogen, and in amylopectin and pullulan.. The protein operates within glycan biosynthesis; starch biosynthesis. It participates in glycan degradation; starch degradation. Functionally, involved in starch degradation and also probably in the trimming of pre-amylopectin chains during starch synthesis. The sequence is that of Pullulanase 1, chloroplastic (PU1) from Arabidopsis thaliana (Mouse-ear cress).